The primary structure comprises 368 residues: DNA-directed RNA polymerase subunit alpha (368 aa).

The alpha N-terminal domain (alpha-NTD) stretch occupies residues 1–231; the sequence is MLWKGFQKPK…DHMNIFINFE (231 aa). An alpha C-terminal domain (alpha-CTD) region spans residues 243–368; that stretch reads KPEIRNENLN…GFGGDNNPGF (126 aa).

The protein belongs to the RNA polymerase alpha chain family. In terms of assembly, homodimer. The RNAP catalytic core consists of 2 alpha, 1 beta, 1 beta' and 1 omega subunit. When a sigma factor is associated with the core the holoenzyme is formed, which can initiate transcription.

It catalyses the reaction RNA(n) + a ribonucleoside 5'-triphosphate = RNA(n+1) + diphosphate. DNA-dependent RNA polymerase catalyzes the transcription of DNA into RNA using the four ribonucleoside triphosphates as substrates. The sequence is that of DNA-directed RNA polymerase subunit alpha from Koribacter versatilis (strain Ellin345).